The chain runs to 705 residues: Translation initiation factor IF-2 (705 aa).

Residues 40–124 form a disordered region; that stretch reads DDQIKALDKK…QPAAPKEIPS (85 aa). Residues 41–58 are compositionally biased toward basic and acidic residues; that stretch reads DQIKALDKKFKKEQKNDN. Residues 59–77 are compositionally biased toward low complexity; that stretch reads KQSTQNNHQKSNNQNQNKG. A compositionally biased stretch (basic residues) spans 94 to 108; sequence KGNKKNNRNNKKNNK. The tr-type G domain occupies 207–376; that stretch reads ERPAVVTIMG…GLVAEVQELK (170 aa). The interval 216–223 is G1; that stretch reads GHVDHGKT. 216-223 contributes to the GTP binding site; sequence GHVDHGKT. The G2 stretch occupies residues 241-245; it reads GITQH. A G3 region spans residues 262 to 265; it reads DTPG. Residues 262–266 and 316–319 each bind GTP; these read DTPGH and NKID. Residues 316-319 are G4; the sequence is NKID. A G5 region spans residues 352-354; sequence SAL.

This sequence belongs to the TRAFAC class translation factor GTPase superfamily. Classic translation factor GTPase family. IF-2 subfamily.

The protein resides in the cytoplasm. Its function is as follows. One of the essential components for the initiation of protein synthesis. Protects formylmethionyl-tRNA from spontaneous hydrolysis and promotes its binding to the 30S ribosomal subunits. Also involved in the hydrolysis of GTP during the formation of the 70S ribosomal complex. The protein is Translation initiation factor IF-2 of Staphylococcus aureus (strain Mu3 / ATCC 700698).